The following is a 408-amino-acid chain: Aminomethyltransferase, mitochondrial (408 aa).

A mitochondrion-targeting transit peptide spans 1 to 30 (MRGGLWQLGQSITRRLANGGDKKAVARRCF). Residues Glu-235, Arg-266, and Tyr-404 each contribute to the substrate site.

Belongs to the GcvT family. In terms of assembly, the glycine cleavage system is composed of four proteins: P, T, L and H.

The protein resides in the mitochondrion. The catalysed reaction is N(6)-[(R)-S(8)-aminomethyldihydrolipoyl]-L-lysyl-[protein] + (6S)-5,6,7,8-tetrahydrofolate = N(6)-[(R)-dihydrolipoyl]-L-lysyl-[protein] + (6R)-5,10-methylene-5,6,7,8-tetrahydrofolate + NH4(+). In terms of biological role, the glycine cleavage system catalyzes the degradation of glycine. The polypeptide is Aminomethyltransferase, mitochondrial (GDCST) (Pisum sativum (Garden pea)).